The primary structure comprises 890 residues: Exo-beta-D-glucosaminidase (890 aa).

The first 18 residues, 1–18 (MIAKAVAALLLGSGLASA), serve as a signal peptide directing secretion. The propeptide occupies 19 to 26 (AGTPLTSK). 3 N-linked (GlcNAc...) asparagine glycosylation sites follow: Asn194, Asn334, and Asn438. Asp462 (proton donor) is an active-site residue. The Nucleophile role is filled by Glu537. Asn576 and Asn687 each carry an N-linked (GlcNAc...) asparagine glycan.

Belongs to the glycosyl hydrolase 2 family. In terms of assembly, monomer.

The protein localises to the secreted. It is found in the extracellular space. It catalyses the reaction Hydrolysis of chitosan or chitosan oligosaccharides to remove successive D-glucosamine residues from the non-reducing termini.. In terms of biological role, hydrolyzes chitosan and chitooligosaccharides with retention of anomeric configuration. Has no activity against beta-D-galactoside, beta-D-glucuronide, beta-D-mannoside, chitin, glycol chitosan, cellulose, N,N'-diacetylchitibiose and pNP-GlcNAc. The sequence is that of Exo-beta-D-glucosaminidase from Hypocrea virens (Gliocladium virens).